A 301-amino-acid chain; its full sequence is Ribosome-inactivating protein (301 aa).

The propeptide at 1–16 (MAEITLEPSDLMAQTN) is or 12 (in 10% of the molecules). The propeptide occupies 162–186 (MATLEEEEVKMQMQMPEAADLAAAA). The active site involves Glu-207. A propeptide spanning residues 258-301 (VIPDMQKLGIKDKNEAARIVALVKNQTTAAAATAASADNDDDEA) is cleaved from the precursor.

The protein belongs to the ribosome-inactivating protein family. Type 1 RIP subfamily. In terms of assembly, synthesized and stored in the kernel as a 34 kDa inactive precursor. During germination, this neutral precursor is converted into a basic, active form by limited proteolysis, which removes 25 AA of net charge -6 from the center of the polypeptide chain. Additional processing also occurs at the N- and C-termini of the polypeptide. A two-chain active RIP (comprised of 16.5 and 8.5 kDa fragments that remain tightly associated) is produced from this processing event.

The catalysed reaction is Endohydrolysis of the N-glycosidic bond at one specific adenosine on the 28S rRNA.. In terms of biological role, potent catalytic inactivator of eukaryotic protein synthesis. It may be a component of natural defense mechanisms involved in protecting the kernel against soil-borne fungal infections. This chain is Ribosome-inactivating protein, found in Zea mays (Maize).